Consider the following 337-residue polypeptide: Diacylglycerol O-acyltransferase 2-like protein 6 (337 aa).

Helical transmembrane passes span 22 to 42 (IPVYVLLGTLSILGMPYLLLF) and 102 to 122 (YIILSHPHGILSYGAFINFAT).

This sequence belongs to the diacylglycerol acyltransferase family.

It localises to the endoplasmic reticulum membrane. The enzyme catalyses 1,2-di-(9Z-octadecenoyl)-sn-glycerol + (9Z)-octadecenoyl-CoA = 1,2,3-tri-(9Z-octadecenoyl)-glycerol + CoA. Its function is as follows. Diglyceride acyltransferase that uses fatty acyl-CoA as substrate. Particularly active with oleate as a substrate. Has no wax synthase activity to produce wax esters. This chain is Diacylglycerol O-acyltransferase 2-like protein 6 (Dgat2l6), found in Mus musculus (Mouse).